Consider the following 40-residue polypeptide: Photosystem II reaction center protein J (40 aa).

A helical transmembrane segment spans residues 8-28 (IPLWLIGTVAGIPVIGLVGVF).

It belongs to the PsbJ family. PSII is composed of 1 copy each of membrane proteins PsbA, PsbB, PsbC, PsbD, PsbE, PsbF, PsbH, PsbI, PsbJ, PsbK, PsbL, PsbM, PsbT, PsbX, PsbY, PsbZ, Psb30/Ycf12, at least 3 peripheral proteins of the oxygen-evolving complex and a large number of cofactors. It forms dimeric complexes.

The protein localises to the plastid. It localises to the chloroplast thylakoid membrane. In terms of biological role, one of the components of the core complex of photosystem II (PSII). PSII is a light-driven water:plastoquinone oxidoreductase that uses light energy to abstract electrons from H(2)O, generating O(2) and a proton gradient subsequently used for ATP formation. It consists of a core antenna complex that captures photons, and an electron transfer chain that converts photonic excitation into a charge separation. This Hordeum jubatum (Foxtail barley) protein is Photosystem II reaction center protein J.